The sequence spans 513 residues: MNGGDEVVAASADPSLPLEWRFSQVFGERSAGEEVQEVDIISAIEFDNSGNHLATGDRGGRVVLFERTDTNNSSGTRRELEEADYPLRHPEFRYKTEFQSHDPEFDYLKSLEIEEKINKIRWCQTANGALFLLSTNDKTIKFWKVQDKKIKKICDMNSDPSRTVGNGTVASSSNSNITNSCLVNGGVSEVNNSLCNDFSLPAGGISSLRLPVVVTSHESSPVARCRRVYAHAHDYHINSISNNSDGETFISADDLRINLWNLEISNQSFNIVDVKPAKMEDLSEVITSAEFHPTHCNMLAYSSSKGSIRLIDLRQSALCDSHSKLFEEPEQAGPKSFFTEIIASVSDIKFAKEGRYLLSRDYMTLKLWDINMDAGPVATFQVHEYLKPKLCDLYENDSIFDKFECCISGNGLRAATGSYSNLFRVFGVAPGSTETATLEASRNPMRRHVPIPSRPSRALSSITRVVSRGSESPGVDGNTNALDYTTKLLHLAWHPNENSIACAAANSLYMYYA.

The residue at position 1 (Met-1) is an N-acetylmethionine. WD repeat units lie at residues 36 to 75, 112 to 153, 232 to 270, 281 to 321, 340 to 378, and 483 to 513; these read QEVDIISAIEFDNSGNHLATGDRGGRVVLFERTDTNNSSG, EIEE…IKKI, AHDYHINSISNNSDGETFISADDLRINLWNLEISNQSFN, DLSE…LCDS, EIIASVSDIKFAKEGRYLLSRDYMTLKLWDINMDAGPVA, and DYTTKLLHLAWHPNENSIACAAANSLYMYYA.

It belongs to the phosphatase 2A regulatory subunit B family. PP2A consists of a common heteromeric enzyme, composed of a catalytic subunit (subunits C), a constant regulatory subunit (subunit A), and a variety of regulatory subunits such as subunits B (the R2/B/PR55/B55, R3/B''/PR72/PR130/PR59 and R5/B'/B56 families). Interacts with SIC/RON3. In terms of tissue distribution, expressed ubiquitously.

Functionally, the B regulatory subunit may modulate substrate selectivity and catalytic activity, and may also direct the localization of the catalytic enzyme to a particular subcellular compartment. In Arabidopsis thaliana (Mouse-ear cress), this protein is Serine/threonine protein phosphatase 2A 55 kDa regulatory subunit B alpha isoform (PP2AB1).